Consider the following 576-residue polypeptide: Insulin-like growth factor 2 mRNA-binding protein 1 (576 aa).

RRM domains are found at residues 2-75 (NKLY…HSVP) and 81-156 (RKIQ…YIPD). Positions 158-189 (QSVQGPENGRRGGFGARGAPRQGSPVTAGAPV) are disordered. KH domains are found at residues 195 to 260 (DIPL…CKMI) and 276 to 343 (EVPL…EQEI). Tyr396 carries the phosphotyrosine; by SRC modification. KH domains are found at residues 404-469 (QETV…QGRI) and 486-552 (KLET…QRKI).

This sequence belongs to the RRM IMP/VICKZ family. In terms of assembly, can form homooligomers and heterooligomers with IGF2BP1 and IGF2BP3 in an RNA-dependent manner. Associates with the cytoskeleton, predominantly with actin filament bundles and occasionally with microtubules. In a heterologous system, interacts with ELAVL1, DHX9 and HNRNPU. Phosphorylated by SRC at Tyr-396. This residue is involved in ACTB mRNA binding, its phosphorylation impairs association with ACTB mRNA and hence abolishes translational repression. Phosphorylation occurs in close proximity to filopodia and in the growth cones of differentiated neuroglioblastoma cells. Expressed in neurons and embryonic fibroblasts (at protein level).

The protein localises to the nucleus. It is found in the cytoplasm. Its subcellular location is the perinuclear region. The protein resides in the P-body. It localises to the stress granule. The protein localises to the cell projection. It is found in the growth cone. Its subcellular location is the filopodium. The protein resides in the lamellipodium. Its function is as follows. RNA-binding factor that recruits target transcripts to cytoplasmic protein-RNA complexes (mRNPs). This transcript 'caging' into mRNPs allows mRNA transport and transient storage. It also modulates the rate and location at which target transcripts encounter the translational apparatus and shields them from endonuclease attacks or microRNA-mediated degradation. Preferentially binds to N6-methyladenosine (m6A)-containing mRNAs and increases their stability. Plays a direct role in the transport and translation of transcripts required for axonal regeneration in adult sensory neurons. Regulates localized beta-actin/ACTB mRNA translation in polarized cells, a crucial process for cell migration and neurite outgrowth. Co-transcriptionally associates with the ACTB mRNA in the nucleus. This binding involves by a conserved 54-nucleotide element in the ACTB mRNA 3'-UTR, known as the 'zipcode'. The ribonucleoparticle (RNP) thus formed is exported to the cytoplasm, binds to a motor protein and is transported along the cytoskeleton to the cell periphery. During transport, IGF2BP1 prevents beta-actin mRNA from being translated into protein. When the RNP complex reaches its destination near the plasma membrane, IGF2BP1 is phosphorylated by SRC. This releases the mRNA, allowing ribosomal 40S and 60S subunits to assemble and initiate ACTB protein synthesis. The monomeric ACTB protein then assembles into the subcortical actin cytoskeleton, which pushes the leading edge onwards. Binds MYC mRNA. Binding to MYC mRNA is enhanced by m6A-modification of the CRD. Promotes the directed movement of cells by fine-tuning intracellular signaling networks. Binds to MAPK4 3'-UTR and inhibits its translation. Interacts with PTEN transcript open reading frame (ORF) and prevents mRNA decay. This combined action on MAPK4 (down-regulation) and PTEN (up-regulation) antagonizes HSPB1 phosphorylation, consequently it prevents G-actin sequestration by phosphorylated HSPB1, allowing F-actin polymerization. Hence enhances the velocity of cell migration and stimulates directed cell migration by PTEN-modulated polarization. This is Insulin-like growth factor 2 mRNA-binding protein 1 (IGF2BP1) from Gallus gallus (Chicken).